A 606-amino-acid polypeptide reads, in one-letter code: Diphthine--ammonia ligase (606 aa).

This sequence in the N-terminal section; belongs to the Diphthine--ammonia ligase family. In the C-terminal section; belongs to the RutC family.

The protein localises to the cytoplasm. It localises to the nucleus. The enzyme catalyses diphthine-[translation elongation factor 2] + NH4(+) + ATP = diphthamide-[translation elongation factor 2] + AMP + diphosphate + H(+). It participates in protein modification; peptidyl-diphthamide biosynthesis. Its function is as follows. Amidase that catalyzes the last step of diphthamide biosynthesis using ammonium and ATP. Diphthamide biosynthesis consists in the conversion of an L-histidine residue in the translation elongation factor eEF-2 (eft201 or eft202) to diphthamide. Has a role in meiosis. The sequence is that of Diphthine--ammonia ligase (mug71) from Schizosaccharomyces pombe (strain 972 / ATCC 24843) (Fission yeast).